The sequence spans 328 residues: uncharacterized protein (328 aa).

Residues 1 to 22 (MPVKPNQPRPSTKQDPSSGASR) form a disordered region. Residues 9–21 (RPSTKQDPSSGAS) show a composition bias toward polar residues. A run of 6 helical transmembrane segments spans residues 66-86 (FSFLSLIPILMVSFATAGFVL), 126-146 (TVGLTGLLIALYSGVNWIGNL), 176-196 (FLSLIGLLLALVITLFLTSVA), 221-241 (LIALSISIFANYLLFLWILWV), 255-275 (GTLMAAIGFEALKFAMTVALP), and 290-310 (IGLMTFFYFFARLTLFCAAWI).

To E.coli YhjD.

Its subcellular location is the cell inner membrane. This is an uncharacterized protein from Dickeya dadantii (strain 3937) (Erwinia chrysanthemi (strain 3937)).